The chain runs to 355 residues: 6-aminohexanoate-oligomer endohydrolase (355 aa).

The Nucleophile role is filled by Thr-267.

Belongs to the peptidase S58 family. In terms of assembly, heterotetramer composed of 4 alpha/beta heterodimers. Expressed as an inactive precursor that is cleaved autocatalytically at Asn266/Thr267 to generate an active enzyme composed of an alpha subunit and a beta subunit.

It carries out the reaction [N-(6-aminohexanoyl)]n + H2O = [N-(6-aminohexanoyl)]n-x + [N-(6-aminohexanoyl)]x.. Its pathway is xenobiotic degradation; nylon-6 oligomer degradation. Its function is as follows. Involved in the degradation of nylon-6 oligomers. Degrades cyclic and linear oligomers of 6-aminohexanoate (Ahx) with a degree of polymerization greater than three by an endo-type mode. Cannot use Ahx cyclic dimer or the Ahx linear dimer. This chain is 6-aminohexanoate-oligomer endohydrolase, found in Agromyces sp. (strain KY5R).